A 109-amino-acid polypeptide reads, in one-letter code: Biphenyl dioxygenase ferredoxin subunit (109 aa).

The 97-residue stretch at 4–100 (TKACSVDEVP…IRIEGRDVLV (97 aa)) folds into the Rieske domain. Residues C43, H45, C63, and H66 each coordinate [2Fe-2S] cluster.

Belongs to the bacterial ring-hydroxylating dioxygenase ferredoxin component family. As to quaternary structure, this dioxygenase system consists of four proteins: the two subunits of the hydroxylase component (BphA1 and BphA2), a ferredoxin (BphA3) and a ferredoxin reductase (BphA4).

In terms of biological role, this protein seems to be a 2Fe-2S ferredoxin. In Pseudomonas sp. (strain KKS102), this protein is Biphenyl dioxygenase ferredoxin subunit (bphA3).